A 926-amino-acid chain; its full sequence is Beta-mannosidase A (926 aa).

An N-terminal signal peptide occupies residues 1-21 (MHVKAETVLALLTPAPPSVVG). N-linked (GlcNAc...) asparagine glycosylation is found at N40, N242, N277, N311, and N342. Residue E474 is the Proton donor of the active site. N532, N603, N626, N653, N733, N756, N785, N793, N819, and N905 each carry an N-linked (GlcNAc...) asparagine glycan.

The protein belongs to the glycosyl hydrolase 2 family. Beta-mannosidase A subfamily. In terms of assembly, homodimer.

It is found in the secreted. The enzyme catalyses Hydrolysis of terminal, non-reducing beta-D-mannose residues in beta-D-mannosides.. The protein operates within glycan metabolism; N-glycan degradation. Its function is as follows. Exoglycosidase that cleaves the single beta-linked mannose residue from the non-reducing end of beta-mannosidic oligosaccharides of various complexity and length. Involved in the degradation of polymeric mannan and galactomannan. This Aspergillus fumigatus (strain ATCC MYA-4609 / CBS 101355 / FGSC A1100 / Af293) (Neosartorya fumigata) protein is Beta-mannosidase A (mndA).